The primary structure comprises 186 residues: ADP-ribosylation factor-like protein DDB_G0292332 (186 aa).

GTP-binding positions include 24–31 (GVENVGKT), 78–82 (DIGGK), and 138–141 (NKQD).

Belongs to the small GTPase superfamily. Arf family.

In terms of biological role, binds and exchanges GTP and GDP. This is ADP-ribosylation factor-like protein DDB_G0292332 from Dictyostelium discoideum (Social amoeba).